The primary structure comprises 120 residues: SAGA-associated factor 11 (120 aa).

Low complexity predominate over residues serine 40 to asparagine 60. The disordered stretch occupies residues serine 40 to serine 82. The SGF11-type zinc-finger motif lies at phenylalanine 93–cysteine 114.

Belongs to the SGF11 family. Component of the 1.8 MDa SAGA transcription coactivator-HAT complex. SAGA is built of 5 distinct domains with specialized functions. Within the SAGA complex, SUS1, SGF11, SGF73 and UBP8 form an additional subcomplex of SAGA called the DUB module (deubiquitination module). Interacts directly with SGF73, SUS1 and UBP8.

The protein localises to the nucleus. Functionally, functions as a component of the transcription regulatory histone acetylation (HAT) complex SAGA. At the promoters, SAGA is required for recruitment of the basal transcription machinery. It influences RNA polymerase II transcriptional activity through different activities such as TBP interaction and promoter selectivity, interaction with transcription activators, and chromatin modification through histone acetylation and deubiquitination. SAGA acetylates nucleosomal histone H3 to some extent (to form H3K9ac, H3K14ac, H3K18ac and H3K23ac). SAGA interacts with DNA via upstream activating sequences (UASs). Involved in transcriptional regulation of a subset of SAGA-regulated genes. Within the SAGA complex, participates in a subcomplex, that specifically deubiquitinates histones H2B. The protein is SAGA-associated factor 11 of Candida albicans (strain SC5314 / ATCC MYA-2876) (Yeast).